A 140-amino-acid polypeptide reads, in one-letter code: Histone H2B (140 aa).

Residues 1-10 are compositionally biased toward basic and acidic residues; that stretch reads MPPKAAEKKP. The interval 1-48 is disordered; the sequence is MPPKAAEKKPSTGGKAPAGKAPAEKKEAGKKTAAAATGDKKKRGKTRK. Lysine 8 and lysine 9 each carry N6-acetyllysine; alternate. Residues lysine 8 and lysine 9 each participate in a glycyl lysine isopeptide (Lys-Gly) (interchain with G-Cter in SUMO); alternate cross-link. The span at 11-21 shows a compositional bias: low complexity; that stretch reads STGGKAPAGKA. N6-acetyllysine is present on lysine 15. Residue lysine 25 is modified to N6-acetyllysine; alternate. A Glycyl lysine isopeptide (Lys-Gly) (interchain with G-Cter in SUMO); alternate cross-link involves residue lysine 25. Residue lysine 26 forms a Glycyl lysine isopeptide (Lys-Gly) (interchain with G-Cter in SUMO) linkage. Residue lysine 134 forms a Glycyl lysine isopeptide (Lys-Gly) (interchain with G-Cter in ubiquitin) linkage.

The protein belongs to the histone H2B family. In terms of assembly, the nucleosome is a histone octamer containing two molecules each of H2A, H2B, H3 and H4 assembled in one H3-H4 heterotetramer and two H2A-H2B heterodimers. The octamer wraps approximately 147 bp of DNA. Monoubiquitinated by the ubc2-bre1 complex to form H2BK123ub1. H2BK123ub1 gives a specific tag for epigenetic transcriptional activation and is also prerequisite for H3K4me and H3K79me formation. H2BK123ub1 also modulates the formation of double-strand breaks during meiosis and is a prerequisite for DNA-damage checkpoint activation. Post-translationally, acetylated by gcn5 to form H2BK11ac and H2BK16ac. H2BK16ac can also be formed by esa1. Acetylation of N-terminal lysines and particularly formation of H2BK11acK16ac has a positive effect on transcription. In terms of processing, sumoylation to form H2BK6su or H2BK7su, and probably also H2BK16su or H2BK17su, occurs preferentially near the telomeres and represses gene transcription.

It is found in the nucleus. It localises to the chromosome. Core component of nucleosome. Nucleosomes wrap and compact DNA into chromatin, limiting DNA accessibility to the cellular machineries which require DNA as a template. Histones thereby play a central role in transcription regulation, DNA repair, DNA replication and chromosomal stability. DNA accessibility is regulated via a complex set of post-translational modifications of histones, also called histone code, and nucleosome remodeling. In Neosartorya fischeri (strain ATCC 1020 / DSM 3700 / CBS 544.65 / FGSC A1164 / JCM 1740 / NRRL 181 / WB 181) (Aspergillus fischerianus), this protein is Histone H2B (htb1).